The chain runs to 344 residues: Arginase 2, chloroplastic/mitochondrial (344 aa).

The N-terminal 26 residues, 1–26 (MWKIGQRGVPYFQRLIAAPFTTLRSL), are a transit peptide targeting the chloroplast and mitochondrion. Mn(2+)-binding residues include histidine 163, aspartate 187, histidine 189, and aspartate 191. Substrate contacts are provided by residues 189 to 193 (HPDIY), 197 to 199 (EGN), and asparagine 228. Mn(2+)-binding residues include aspartate 272 and aspartate 274. Glutamate 315 lines the substrate pocket.

Belongs to the arginase family. The cofactor is Mn(2+). Expressed in vasculature of roots, root tips, leaves and cotyledons.

The protein localises to the mitochondrion. It is found in the plastid. It localises to the chloroplast. It carries out the reaction L-arginine + H2O = urea + L-ornithine. The catalysed reaction is agmatine + H2O = urea + putrescine. The protein operates within nitrogen metabolism; urea cycle; L-ornithine and urea from L-arginine: step 1/1. It participates in amine and polyamine biosynthesis; putrescine biosynthesis via agmatine pathway; putrescine from agmatine: step 1/1. Functionally, catalyzes the hydrolysis of L-arginine to urea and L-ornithine. The latter can be utilized in the urea cycle or as a precursor for the synthesis of both polyamines and proline. Possesses agmatinase activity. Catalyzes the formation of putrescine from agmatine. The polypeptide is Arginase 2, chloroplastic/mitochondrial (ARGAH2) (Arabidopsis thaliana (Mouse-ear cress)).